The primary structure comprises 148 residues: uncharacterized protein (148 aa).

An N-terminal signal peptide occupies residues 1–35; it reads MRCVTRTRNWWRRAARMPRAGSSAWWVAVCKQVCT.

It localises to the secreted. This is an uncharacterized protein from Homo sapiens (Human).